The primary structure comprises 1405 residues: DNA-directed RNA polymerase subunit beta' (1405 aa).

Residues cysteine 70, cysteine 72, cysteine 85, and cysteine 88 each coordinate Zn(2+). The Mg(2+) site is built by aspartate 460, aspartate 462, and aspartate 464. Residues cysteine 814, cysteine 888, cysteine 895, and cysteine 898 each coordinate Zn(2+).

This sequence belongs to the RNA polymerase beta' chain family. The RNAP catalytic core consists of 2 alpha, 1 beta, 1 beta' and 1 omega subunit. When a sigma factor is associated with the core the holoenzyme is formed, which can initiate transcription. Requires Mg(2+) as cofactor. The cofactor is Zn(2+).

The catalysed reaction is RNA(n) + a ribonucleoside 5'-triphosphate = RNA(n+1) + diphosphate. Functionally, DNA-dependent RNA polymerase catalyzes the transcription of DNA into RNA using the four ribonucleoside triphosphates as substrates. The polypeptide is DNA-directed RNA polymerase subunit beta' (Shewanella sediminis (strain HAW-EB3)).